A 544-amino-acid chain; its full sequence is CTP synthase (544 aa).

The tract at residues methionine 1–leucine 266 is amidoligase domain. Serine 13 contacts CTP. Residue serine 13 participates in UTP binding. Serine 14–isoleucine 19 lines the ATP pocket. An L-glutamine-binding site is contributed by tyrosine 54. ATP is bound at residue aspartate 71. Residues aspartate 71 and glutamate 140 each coordinate Mg(2+). CTP is bound by residues aspartate 147 to glutamate 149, lysine 187 to glutamine 192, and lysine 223. Residues lysine 187–glutamine 192 and lysine 223 contribute to the UTP site. Positions lysine 292 to leucine 543 constitute a Glutamine amidotransferase type-1 domain. An L-glutamine-binding site is contributed by glycine 354. Residue cysteine 381 is the Nucleophile; for glutamine hydrolysis of the active site. Residues phenylalanine 382–glutamine 385, glutamate 405, and arginine 471 contribute to the L-glutamine site. Active-site residues include histidine 516 and glutamate 518.

The protein belongs to the CTP synthase family. In terms of assembly, homotetramer.

It carries out the reaction UTP + L-glutamine + ATP + H2O = CTP + L-glutamate + ADP + phosphate + 2 H(+). The enzyme catalyses L-glutamine + H2O = L-glutamate + NH4(+). The catalysed reaction is UTP + NH4(+) + ATP = CTP + ADP + phosphate + 2 H(+). It participates in pyrimidine metabolism; CTP biosynthesis via de novo pathway; CTP from UDP: step 2/2. Allosterically activated by GTP, when glutamine is the substrate; GTP has no effect on the reaction when ammonia is the substrate. The allosteric effector GTP functions by stabilizing the protein conformation that binds the tetrahedral intermediate(s) formed during glutamine hydrolysis. Inhibited by the product CTP, via allosteric rather than competitive inhibition. Catalyzes the ATP-dependent amination of UTP to CTP with either L-glutamine or ammonia as the source of nitrogen. Regulates intracellular CTP levels through interactions with the four ribonucleotide triphosphates. The chain is CTP synthase from Granulibacter bethesdensis (strain ATCC BAA-1260 / CGDNIH1).